The primary structure comprises 833 residues: Zinc transporter ZIP10 (833 aa).

The signal sequence occupies residues 1–25 (MKVHIHTKFCLICLLTFIFHHCNHC). Residues 30 to 48 (DHGPEELHRHHRGMTESES) show a composition bias toward basic and acidic residues. 2 disordered regions span residues 30–54 (DHGPEELHRHHRGMTESESSKFSVQ) and 137–167 (AENHTTTSVTSKRNHKCDPEKEAAELPIKAD). Residues 137–147 (AENHTTTSVTS) are compositionally biased toward polar residues. Residues 152–167 (KCDPEKEAAELPIKAD) are compositionally biased toward basic and acidic residues. 2 N-linked (GlcNAc...) asparagine glycosylation sites follow: Asn191 and Asn198. Residues 200–209 (SVAHSEHGEP) show a composition bias toward basic and acidic residues. Disordered stretches follow at residues 200 to 257 (SVAH…NHDH) and 271 to 335 (RVHS…EDDR). Residue Asn218 is glycosylated (N-linked (GlcNAc...) asparagine). The span at 229–241 (VKVRRKEKGKRKK) shows a compositional bias: basic residues. 2 stretches are compositionally biased toward basic and acidic residues: residues 281–315 (HLPEHSGHELGHGHQELDPDNEGELRHTRKREAPH) and 326–335 (SHKDQSEDDR). Asn341 is a glycosylation site (N-linked (GlcNAc...) asparagine). The next 2 helical transmembrane spans lie at 413 to 433 (IISITVISLLSLLGVILVPII) and 440 to 460 (FLLTFLVALAVGTMSGDALLH). The disordered stretch occupies residues 466 to 485 (QGGHDHSHQHTHGHGHSHGH). Residues 497 to 517 (VLKGLVALGGIYLLFIIEHCI) form a helical membrane-spanning segment. Phosphothreonine occurs at positions 538 and 555. Position 593 is a phosphoserine (Ser593). 4 helical membrane-spanning segments follow: residues 689 to 709 (AIGAAFSAGLTGGISTSIAVF), 734 to 754 (IVYNLLSAMMAYIGMLIGTAV), 761 to 781 (ITLWIFAITAGMFLYVALVDM), and 803 to 823 (FILQNLGLLFGFAIMLVIALY).

It belongs to the ZIP transporter (TC 2.A.5) family. As to quaternary structure, interacts with SLC39A6. This interaction triggers cells to undergo EMT and mitosis. Found in a complex with SLC39A6, SLC39A10 and with the 'Ser-727' phosphorylated form of STAT3 throughout mitosis. Found in a complex with SLC39A6, SLC39A10 and with NCAM1; this complex controls NCAM1 phosphorylation and integration into focal adhesion complexes during epithelial-tomesenchymal transition. Found in a complex with SLC39A6, SLC39A10 and with GSK3B that controls NCAM1 phosphorylation. In terms of processing, undergoes N-terminal ectodomain shedding. In terms of tissue distribution, expressed in the liver, kidney and brain.

Its subcellular location is the cell membrane. It is found in the apical cell membrane. It catalyses the reaction Zn(2+)(in) = Zn(2+)(out). Zinc-influx transporter. When associated with SLC39A6, the heterodimer formed by SLC39A10 and SLC39A6 mediates cellular zinc uptake to trigger cells to undergo epithelial-to-mesenchymal transition (EMT). mediates cellular zinc uptake to trigger cells to undergo epithelial-to-mesenchymal transition (EMT). SLC39A10-SLC39A6 heterodimers play also an essentiel role in initiating mitosis by importing zinc into cells to initiate a pathway resulting in the onset of mitosis. Plays an important for both mature B-cell maintenance and humoral immune responses. When associated with SLC39A10, the heterodimer controls NCAM1 phosphorylation and integration into focal adhesion complexes during EMT. This chain is Zinc transporter ZIP10, found in Mus musculus (Mouse).